The sequence spans 194 residues: Orotate phosphoribosyltransferase (194 aa).

5-phospho-alpha-D-ribose 1-diphosphate is bound by residues Arg-102, Lys-103, Lys-106, His-108, and 129 to 137; that span reads EDVVTTGGS. Positions 133 and 161 each coordinate orotate.

Belongs to the purine/pyrimidine phosphoribosyltransferase family. PyrE subfamily. As to quaternary structure, homodimer. Mg(2+) is required as a cofactor.

The catalysed reaction is orotidine 5'-phosphate + diphosphate = orotate + 5-phospho-alpha-D-ribose 1-diphosphate. The protein operates within pyrimidine metabolism; UMP biosynthesis via de novo pathway; UMP from orotate: step 1/2. In terms of biological role, catalyzes the transfer of a ribosyl phosphate group from 5-phosphoribose 1-diphosphate to orotate, leading to the formation of orotidine monophosphate (OMP). The sequence is that of Orotate phosphoribosyltransferase from Synechococcus sp. (strain CC9902).